The chain runs to 607 residues: UvrABC system protein C (607 aa).

The GIY-YIG domain occupies 16–94 (GRPGVYRMFD…IKEWRPPYNI (79 aa)). One can recognise a UVR domain in the interval 203 to 238 (NALSDELNASMEKAAMALDFERAAELRDQVALLRRV).

This sequence belongs to the UvrC family. Interacts with UvrB in an incision complex.

The protein resides in the cytoplasm. Functionally, the UvrABC repair system catalyzes the recognition and processing of DNA lesions. UvrC both incises the 5' and 3' sides of the lesion. The N-terminal half is responsible for the 3' incision and the C-terminal half is responsible for the 5' incision. The sequence is that of UvrABC system protein C from Pseudomonas syringae pv. syringae (strain B728a).